The chain runs to 515 residues: Elongation factor 1-alpha S (515 aa).

A tr-type G domain is found at lysine 5 to threonine 258. Positions glycine 14–serine 21 are G1. GTP is bound at residue glycine 14–serine 21. Lysine 55 is subject to N6,N6-dimethyllysine. A G2 region spans residues glycine 70 to aspartate 74. Lysine 79 carries the post-translational modification N6,N6,N6-trimethyllysine. A G3 region spans residues aspartate 91–glycine 94. GTP contacts are provided by residues aspartate 91–histidine 95 and asparagine 151–aspartate 154. Residues asparagine 151 to aspartate 154 are G4. Residues lysine 187 to aspartate 206 are disordered. Positions aspartate 189–aspartate 206 are enriched in basic and acidic residues. Positions serine 222–tryptophan 224 are G5. Lysine 289 is modified (N6-methyllysine). The residue at position 334 (lysine 334) is an N6,N6,N6-trimethyllysine. The segment at lysine 396–arginine 419 is disordered. Residues glycine 398–arginine 419 show a composition bias toward basic and acidic residues. The residue at position 441 (lysine 441) is an N6,N6,N6-trimethyllysine.

This sequence belongs to the TRAFAC class translation factor GTPase superfamily. Classic translation factor GTPase family. EF-Tu/EF-1A subfamily.

The protein localises to the cytoplasm. Functionally, this protein promotes the GTP-dependent binding of aminoacyl-tRNA to the A-site of ribosomes during protein biosynthesis. This Porphyra purpurea (Red seaweed) protein is Elongation factor 1-alpha S (TEF-S).